Consider the following 123-residue polypeptide: Probable cytochrome c 2.2 (123 aa).

A disordered region spans residues 1–21 (MGKKKSDTASGGAIPEGDNEK). Cys-30, Cys-33, His-34, and Met-95 together coordinate heme c.

The protein belongs to the cytochrome c family. In terms of processing, binds 1 heme c group covalently per subunit.

It localises to the mitochondrion intermembrane space. Functionally, electron carrier protein. The oxidized form of the cytochrome c heme group can accept an electron from the heme group of the cytochrome c1 subunit of cytochrome reductase. Cytochrome c then transfers this electron to the cytochrome oxidase complex, the final protein carrier in the mitochondrial electron-transport chain. The chain is Probable cytochrome c 2.2 (cyc-2.2) from Caenorhabditis elegans.